A 167-amino-acid chain; its full sequence is Lipoprotein signal peptidase (167 aa).

The next 2 membrane-spanning stretches (helical) occupy residues 56–76 (FAPP…VLVF) and 84–104 (TPIF…NMID). Catalysis depends on residues Asp-113 and Asp-139. Residues 132 to 152 (WPIFNVADSAITIGACMLVLF) form a helical membrane-spanning segment.

It belongs to the peptidase A8 family.

It is found in the cell inner membrane. The catalysed reaction is Release of signal peptides from bacterial membrane prolipoproteins. Hydrolyzes -Xaa-Yaa-Zaa-|-(S,diacylglyceryl)Cys-, in which Xaa is hydrophobic (preferably Leu), and Yaa (Ala or Ser) and Zaa (Gly or Ala) have small, neutral side chains.. It participates in protein modification; lipoprotein biosynthesis (signal peptide cleavage). In terms of biological role, this protein specifically catalyzes the removal of signal peptides from prolipoproteins. This chain is Lipoprotein signal peptidase, found in Chlorobium luteolum (strain DSM 273 / BCRC 81028 / 2530) (Pelodictyon luteolum).